Reading from the N-terminus, the 330-residue chain is tRNA N6-adenosine threonylcarbamoyltransferase (330 aa).

Fe cation-binding residues include H110 and H114. Residues 133–137 (LVSGG), D166, G179, and N268 each bind substrate. D296 is a Fe cation binding site.

Belongs to the KAE1 / TsaD family. Requires Fe(2+) as cofactor.

It is found in the cytoplasm. It carries out the reaction L-threonylcarbamoyladenylate + adenosine(37) in tRNA = N(6)-L-threonylcarbamoyladenosine(37) in tRNA + AMP + H(+). In terms of biological role, required for the formation of a threonylcarbamoyl group on adenosine at position 37 (t(6)A37) in tRNAs that read codons beginning with adenine. Is involved in the transfer of the threonylcarbamoyl moiety of threonylcarbamoyl-AMP (TC-AMP) to the N6 group of A37, together with TsaE and TsaB. TsaD likely plays a direct catalytic role in this reaction. The sequence is that of tRNA N6-adenosine threonylcarbamoyltransferase from Kosmotoga olearia (strain ATCC BAA-1733 / DSM 21960 / TBF 19.5.1).